Here is a 74-residue protein sequence, read N- to C-terminus: Putative membrane protein insertion efficiency factor (74 aa).

It belongs to the UPF0161 family.

Its subcellular location is the cell inner membrane. Functionally, could be involved in insertion of integral membrane proteins into the membrane. In Syntrophus aciditrophicus (strain SB), this protein is Putative membrane protein insertion efficiency factor.